The following is a 370-amino-acid chain: Chaperone protein DnaJ (370 aa).

The J domain occupies 4-68; the sequence is DYYQVLGVSK…QKRAAYDRFG (65 aa). The CR-type zinc-finger motif lies at 133–211; it reads GIEKNISFSS…CHGMGRYHKQ (79 aa). 8 residues coordinate Zn(2+): Cys146, Cys149, Cys163, Cys166, Cys185, Cys188, Cys199, and Cys202. CXXCXGXG motif repeat units follow at residues 146–153, 163–170, 185–192, and 199–206; these read CDACHGTG, CDSCGGVG, CHKCQGNG, and CKKCHGMG.

The protein belongs to the DnaJ family. Homodimer. Requires Zn(2+) as cofactor.

Its subcellular location is the cytoplasm. In terms of biological role, participates actively in the response to hyperosmotic and heat shock by preventing the aggregation of stress-denatured proteins and by disaggregating proteins, also in an autonomous, DnaK-independent fashion. Unfolded proteins bind initially to DnaJ; upon interaction with the DnaJ-bound protein, DnaK hydrolyzes its bound ATP, resulting in the formation of a stable complex. GrpE releases ADP from DnaK; ATP binding to DnaK triggers the release of the substrate protein, thus completing the reaction cycle. Several rounds of ATP-dependent interactions between DnaJ, DnaK and GrpE are required for fully efficient folding. Also involved, together with DnaK and GrpE, in the DNA replication of plasmids through activation of initiation proteins. The protein is Chaperone protein DnaJ of Rickettsia typhi (strain ATCC VR-144 / Wilmington).